We begin with the raw amino-acid sequence, 193 residues long: Large ribosomal subunit protein uL18 (193 aa).

This sequence belongs to the universal ribosomal protein uL18 family. As to quaternary structure, part of the 50S ribosomal subunit. Contacts the 5S and 23S rRNAs.

Functionally, this is one of the proteins that bind and probably mediate the attachment of the 5S RNA into the large ribosomal subunit, where it forms part of the central protuberance. The sequence is that of Large ribosomal subunit protein uL18 from Methanobrevibacter smithii (strain ATCC 35061 / DSM 861 / OCM 144 / PS).